The chain runs to 306 residues: GTP cyclohydrolase FolE2 (306 aa).

Belongs to the GTP cyclohydrolase IV family.

It carries out the reaction GTP + H2O = 7,8-dihydroneopterin 3'-triphosphate + formate + H(+). It participates in cofactor biosynthesis; 7,8-dihydroneopterin triphosphate biosynthesis; 7,8-dihydroneopterin triphosphate from GTP: step 1/1. Functionally, converts GTP to 7,8-dihydroneopterin triphosphate. The polypeptide is GTP cyclohydrolase FolE2 (Xanthomonas oryzae pv. oryzae (strain MAFF 311018)).